We begin with the raw amino-acid sequence, 107 residues long: Heme-degrading monooxygenase (107 aa).

Positions 2 to 93 (VIVANKTLIR…DYILGNEIEF (92 aa)) constitute an ABM domain. Fe cation is bound at residue N6. A heme-binding site is contributed by H76.

Belongs to the antibiotic biosynthesis monooxygenase family. Heme-degrading monooxygenase IsdG subfamily. As to quaternary structure, homodimer.

It localises to the cytoplasm. It catalyses the reaction heme b + 3 reduced [NADPH--hemoprotein reductase] + 3 O2 = biliverdin IXalpha + CO + Fe(2+) + 3 oxidized [NADPH--hemoprotein reductase] + 3 H2O + H(+). In terms of biological role, allows bacterial pathogens to use the host heme as an iron source. Catalyzes the oxidative degradation of the heme macrocyclic porphyrin ring to the biliverdin in the presence of a suitable electron donor such as ascorbate or NADPH--cytochrome P450 reductase, with subsequent release of free iron. The protein is Heme-degrading monooxygenase of Shouchella clausii (strain KSM-K16) (Alkalihalobacillus clausii).